The sequence spans 327 residues: Vacuolar protein sorting-associated protein 26A (327 aa).

A disordered region spans residues 305-327 (RNFHQRYESPEPRPSLSAEQPEM).

This sequence belongs to the VPS26 family. Component of the heterotrimeric retromer cargo-selective complex (CSC) which is believed to associate with variable sorting nexins to form functionally distinct retromer complex variants.

The protein resides in the cytoplasm. Its subcellular location is the endosome membrane. It localises to the early endosome. Its function is as follows. Acts as a component of the retromer cargo-selective complex (CSC). The CSC is believed to be the core functional component of retromer or respective retromer complex variants acting to prevent missorting of selected transmembrane cargo proteins into the lysosomal degradation pathway. Retromer mediates retrograde transport of cargo proteins from endosomes to the trans-Golgi network (TGN). This Danio rerio (Zebrafish) protein is Vacuolar protein sorting-associated protein 26A (vps26a).